The primary structure comprises 510 residues: NAD(P)H-quinone oxidoreductase subunit 2 B, chloroplastic (510 aa).

12 helical membrane passes run 24-44 (LLLF…GLIL), 57-77 (IPWL…ALLF), 99-119 (IFQF…VEYI), 124-144 (MAIT…MFLC), 183-203 (YLLM…WLYG), 227-247 (PGIS…LSPA), 295-315 (WHLL…LIAI), 323-343 (MLAY…IVGD), 347-367 (GYAS…GTFA), 395-415 (ALSS…AGFF), 418-438 (LHLF…IGLL), and 484-504 (MIVC…IIAI).

It belongs to the complex I subunit 2 family. As to quaternary structure, NDH is composed of at least 16 different subunits, 5 of which are encoded in the nucleus.

It localises to the plastid. The protein resides in the chloroplast thylakoid membrane. The catalysed reaction is a plastoquinone + NADH + (n+1) H(+)(in) = a plastoquinol + NAD(+) + n H(+)(out). It carries out the reaction a plastoquinone + NADPH + (n+1) H(+)(in) = a plastoquinol + NADP(+) + n H(+)(out). NDH shuttles electrons from NAD(P)H:plastoquinone, via FMN and iron-sulfur (Fe-S) centers, to quinones in the photosynthetic chain and possibly in a chloroplast respiratory chain. The immediate electron acceptor for the enzyme in this species is believed to be plastoquinone. Couples the redox reaction to proton translocation, and thus conserves the redox energy in a proton gradient. The polypeptide is NAD(P)H-quinone oxidoreductase subunit 2 B, chloroplastic (Calycanthus floridus var. glaucus (Eastern sweetshrub)).